Reading from the N-terminus, the 629-residue chain is FAST kinase domain-containing protein 4 (629 aa).

The RAP domain maps to 559–617; sequence IAFLRWEFPNFNSRSKDLLGRFVLARRHVLAAGFLVVDVPYYEWLDLKSEWQKTAYLKD.

The protein belongs to the FAST kinase family.

Its subcellular location is the mitochondrion matrix. Plays a role in processing of mitochondrial RNA precursors and in stabilization of a subset of mature mitochondrial RNA species, such as MT-CO1, MT-CO2, MT-CYB, MT-CO3, MT-ND3, MT-ND5 and MT-ATP8/6. May play a role in cell cycle progression. The sequence is that of FAST kinase domain-containing protein 4 (Tbrg4) from Rattus norvegicus (Rat).